A 469-amino-acid chain; its full sequence is 3-isopropylmalate dehydratase large subunit (469 aa).

Residues Cys-347, Cys-410, and Cys-413 each contribute to the [4Fe-4S] cluster site.

The protein belongs to the aconitase/IPM isomerase family. LeuC type 1 subfamily. In terms of assembly, heterodimer of LeuC and LeuD. It depends on [4Fe-4S] cluster as a cofactor.

The enzyme catalyses (2R,3S)-3-isopropylmalate = (2S)-2-isopropylmalate. It functions in the pathway amino-acid biosynthesis; L-leucine biosynthesis; L-leucine from 3-methyl-2-oxobutanoate: step 2/4. Functionally, catalyzes the isomerization between 2-isopropylmalate and 3-isopropylmalate, via the formation of 2-isopropylmaleate. The protein is 3-isopropylmalate dehydratase large subunit of Burkholderia mallei (strain NCTC 10247).